Reading from the N-terminus, the 319-residue chain is Protein quaking-B (319 aa).

A KH domain is found at 87-153; it reads YVPVKEYPDF…WEHLNEDLHV (67 aa). The SH3-binding signature appears at 276 to 279; sequence PQTP.

This sequence belongs to the quaking family. As to quaternary structure, homodimer; does not require RNA to homodimerize.

It localises to the cytoplasm. The protein localises to the nucleus. In terms of biological role, RNA reader protein, which recognizes and binds specific RNAs, thereby regulating RNA metabolic processes, such as pre-mRNA splicing, circular RNA (circRNA) formation, mRNA export, mRNA stability and/or translation. Involved in various cellular processes, such as mRNA storage into stress granules, apoptosis, interferon response, glial cell fate and development. Binds to the 5'-NACUAAY-N(1,20)-UAAY-3' RNA core sequence. Acts as a mRNA modification reader that specifically recognizes and binds mRNA transcripts modified by internal N(7)-methylguanine (m7G). Promotes the formation of circular RNAs (circRNAs): acts by binding to sites flanking circRNA-forming exons. CircRNAs are produced by back-splicing circularization of pre-mRNAs. Required to protect and promote stability of mRNAs which promotes oligodendrocyte differentiation. Acts as an important regulator of muscle development: required during early skeletal myofibril formation by regulating the accumulation of the muscle-specific tropomyosin-3 (tpm3) transcripts. In Danio rerio (Zebrafish), this protein is Protein quaking-B (qki2).